A 1575-amino-acid polypeptide reads, in one-letter code: Ras GTPase-activating-like protein IQGAP2 (1575 aa).

Residue Ser-16 is modified to Phosphoserine. The Calponin-homology (CH) domain maps to 41-156; the sequence is LCHLEEAKRW…YCIHALSLYL (116 aa). Thr-356 carries the phosphothreonine modification. The WW domain occupies 594 to 627; the sequence is VSSDGSWLKLNLHKKYDYYYNTDSKESSWVTPES. A phosphoserine mark is found at Ser-595, Ser-599, and Ser-685. IQ domains follow at residues 690–719, 720–749, and 750–779; these read QEENVVKIQAFWKGYKQRKEYMHRRQTFID, NTDSIVKIQSWFRMATARKSYLSRLQYFRD, and HNNEIVKIQSLLRANKARDDYKTLVGSENP. At Thr-716 the chain carries Phosphothreonine. Phosphothreonine is present on residues Thr-782, Thr-881, Thr-1002, and Thr-1269. Positions 933–1182 constitute a Ras-GAP domain; that stretch reads YLLLKLFKTA…QEFRKYFKEA (250 aa). Ser-1271, Ser-1279, Ser-1358, and Ser-1461 each carry phosphoserine.

Isoform 2 expression is enhanced in testis.

Functionally, binds to activated CDC42 and RAC1 but does not seem to stimulate their GTPase activity. Associates with calmodulin. This chain is Ras GTPase-activating-like protein IQGAP2 (IQGAP2), found in Homo sapiens (Human).